A 337-amino-acid chain; its full sequence is Diacylglycerol acyltransferase/mycolyltransferase Ag85A (337 aa).

Residues 1–42 form the signal peptide; the sequence is MKLVDRFRGAATGTSRRLMVGAVGAALLSGLVGFVGGSATAS. A substrate-binding site is contributed by 85-86; it reads MR. Residues 101 to 111 are fibronectin-binding; sequence FEWYYQSGISV. A disulfide bond links cysteine 130 and cysteine 135. Substrate contacts are provided by serine 169 and aspartate 197. Residue serine 169 is the Nucleophile of the active site. Residue glutamate 273 is part of the active site. Substrate contacts are provided by residues 275 to 278, lysine 282, and 305 to 307; these read FVRT and HSW. Histidine 305 is a catalytic residue.

This sequence belongs to the mycobacterial A85 antigen family. As to quaternary structure, homodimer.

The protein resides in the secreted. It localises to the cell wall. The protein localises to the cytoplasm. The enzyme catalyses an acyl-CoA + a 1,2-diacyl-sn-glycerol = a triacyl-sn-glycerol + CoA. It catalyses the reaction 2 alpha,alpha'-trehalose 6-mycolate = alpha,alpha'-trehalose 6,6'-bismycolate + alpha,alpha-trehalose. The antigen 85 proteins (FbpA, FbpB, FbpC) are responsible for the high affinity of mycobacteria for fibronectin, a large adhesive glycoprotein, which facilitates the attachment of M.tuberculosis to murine alveolar macrophages (AMs). They also help to maintain the integrity of the cell wall by catalyzing the transfer of mycolic acids to cell wall arabinogalactan, and through the synthesis of alpha,alpha-trehalose dimycolate (TDM, cord factor). They catalyze the transfer of a mycoloyl residue from one molecule of alpha,alpha-trehalose monomycolate (TMM) to another TMM, leading to the formation of TDM. FbpA mediates triacylglycerol (TAG) formation with long-chain acyl-CoA as the acyl donor and 1,2-dipalmitoyl-sn-glycerol (1,2-dipalmitin) as the acyl acceptor. It has a preference for C26:0-CoA over C18:1-CoA. The protein is Diacylglycerol acyltransferase/mycolyltransferase Ag85A (fbpA) of Mycobacterium ulcerans.